The primary structure comprises 262 residues: ATP synthase subunit a (262 aa).

The next 5 helical transmembrane spans lie at 24–44 (AVHLDTLFFSLLAGVIFLFVF), 84–104 (VIAPLALTIFCWVFIMNAIDL), 129–149 (DISATLGMSICVFFLILFYTV), 194–214 (LFGNMYAGELIFILIAVMYMA), and 228–248 (LVWAIFHILVITLQAFIFMML).

This sequence belongs to the ATPase A chain family. As to quaternary structure, F-type ATPases have 2 components, CF(1) - the catalytic core - and CF(0) - the membrane proton channel. CF(1) has five subunits: alpha(3), beta(3), gamma(1), delta(1), epsilon(1). CF(0) has three main subunits: a(1), b(2) and c(9-12). The alpha and beta chains form an alternating ring which encloses part of the gamma chain. CF(1) is attached to CF(0) by a central stalk formed by the gamma and epsilon chains, while a peripheral stalk is formed by the delta and b chains.

The protein localises to the cell inner membrane. Functionally, key component of the proton channel; it plays a direct role in the translocation of protons across the membrane. The protein is ATP synthase subunit a of Actinobacillus pleuropneumoniae serotype 3 (strain JL03).